The chain runs to 134 residues: Probable 4-amino-4-deoxy-L-arabinose-phosphoundecaprenol flippase subunit ArnF (134 aa).

Over 1-5 the chain is Cytoplasmic; the sequence is MNRRR. A helical transmembrane segment spans residues 6–26; sequence GILFALASVLLVSVAQLSMRW. At 27–45 the chain is on the periplasmic side; the sequence is SMTRLPRPDQWLSVPSVDS. Residues 46–66 form a helical membrane-spanning segment; that stretch reads VALAVVLAAIFAYALSMLCWL. At 67–77 the chain is on the cytoplasmic side; it reads AALRDLPLGRA. Residues 78 to 98 form a helical membrane-spanning segment; sequence YSLLSISYALVYLLAASLPLF. Topologically, residues 99–101 are periplasmic; sequence NES. Residues 102 to 122 traverse the membrane as a helical segment; sequence FSFSKSLGVALVMLGVITINT. Residues 123–134 are Cytoplasmic-facing; the sequence is RPARAPELRSSP.

The protein belongs to the ArnF family. In terms of assembly, heterodimer of ArnE and ArnF.

The protein resides in the cell inner membrane. The protein operates within bacterial outer membrane biogenesis; lipopolysaccharide biosynthesis. Translocates 4-amino-4-deoxy-L-arabinose-phosphoundecaprenol (alpha-L-Ara4N-phosphoundecaprenol) from the cytoplasmic to the periplasmic side of the inner membrane. The sequence is that of Probable 4-amino-4-deoxy-L-arabinose-phosphoundecaprenol flippase subunit ArnF from Pseudomonas fluorescens (strain Pf0-1).